Reading from the N-terminus, the 466-residue chain is uncharacterized protein (466 aa).

The 289-residue stretch at 178–466 (SQGSASSMWM…QGMLGVKYSW (289 aa)) folds into the Autotransporter domain.

This is an uncharacterized protein from Escherichia coli (strain K12).